The chain runs to 365 residues: Peptide chain release factor 2 (365 aa).

Residue Gln252 is modified to N5-methylglutamine.

This sequence belongs to the prokaryotic/mitochondrial release factor family. Post-translationally, methylated by PrmC. Methylation increases the termination efficiency of RF2.

It is found in the cytoplasm. Peptide chain release factor 2 directs the termination of translation in response to the peptide chain termination codons UGA and UAA. This is Peptide chain release factor 2 (prfB) from Salmonella typhimurium (strain LT2 / SGSC1412 / ATCC 700720).